Reading from the N-terminus, the 409-residue chain is Beta-glucanase (409 aa).

A signal peptide spans 1–31; that stretch reads MRKNRGFSFSSKAVMMCCLAFLLIPASFAFA. The Proton donor role is filled by Glu95. Asp156 functions as the Nucleophile in the catalytic mechanism.

Belongs to the glycosyl hydrolase 8 (cellulase D) family.

The catalysed reaction is Hydrolysis of (1-&gt;4)-beta-D-glucosidic linkages in beta-D-glucans containing (1-&gt;3)- and (1-&gt;4)-bonds.. This is Beta-glucanase (bgc) from Niallia circulans (Bacillus circulans).